Consider the following 312-residue polypeptide: MIEFEKPTITKIDENKDYGRFVIEPLERGYGTTLGNSLRRVLLASLPGAAVTSIKIDGVLHEFDTVPGVREDVMQIILNIKGIAVKSYVEDEKKIELDVVGPAEVTAGDILTDSDIEIVNPDHYLFTIADGATFKAVLTVNSGRGYVPAEDNKKDDAPVGTLAVDSIYTPVKKVNYQVEPARVGSNDGFDKLTLEINTNGTIIPEDALGLSARILMEHLGLFTDLTEVAKSAEVMKEAEVASDDRMLDRTIEELDLSVRSYNCLKRAGINTVFDLTEKTEPEMMKVRNLGRKSLEEVKVKLADLGLGLKKDK.

The tract at residues 1–226 (MIEFEKPTIT…EHLGLFTDLT (226 aa)) is alpha N-terminal domain (alpha-NTD). Positions 242–312 (SDDRMLDRTI…DLGLGLKKDK (71 aa)) are alpha C-terminal domain (alpha-CTD).

It belongs to the RNA polymerase alpha chain family. In terms of assembly, homodimer. The RNAP catalytic core consists of 2 alpha, 1 beta, 1 beta' and 1 omega subunit. When a sigma factor is associated with the core the holoenzyme is formed, which can initiate transcription.

It carries out the reaction RNA(n) + a ribonucleoside 5'-triphosphate = RNA(n+1) + diphosphate. DNA-dependent RNA polymerase catalyzes the transcription of DNA into RNA using the four ribonucleoside triphosphates as substrates. The chain is DNA-directed RNA polymerase subunit alpha from Streptococcus suis (strain 98HAH33).